Reading from the N-terminus, the 1284-residue chain is 1,6-alpha-glucosyltransferase (1284 aa).

The N-terminal stretch at 1–35 is a signal peptide; that stretch reads MRPPNKEIPRILAFFTAFTLFGSTLALLPAPPAHA. The active-site Nucleophile is aspartate 433. Aspartate 436 is a catalytic residue. The Proton donor role is filled by aspartate 495. 2 CBM6 domains span residues 856 to 988 and 994 to 1120; these read SQYE…ITVP and GKYE…LLLS.

Belongs to the glycosyl hydrolase 31 family.

Its subcellular location is the secreted. It carries out the reaction 2 D-maltotetraose = alpha-isomaltosyl-(1-&gt;4)-D-maltotriose + D-maltotriose. It catalyses the reaction Transfers an alpha-D-glucosyl residue in a (1-&gt;4)-alpha-D-glucan to the primary hydroxy group of glucose, free or combined in a (1-&gt;4)-alpha-D-glucan.. With respect to regulation, strongly activated and stabilized by various divalent cations. Strongly inhibited by Cu(2+), Hg(2+) and EDTA, and moderately inhibited by Tris. Glycosyltransferase involved, together with CtsY, in the conversion of alpha-1,4-glucan into a cyclic tetrasaccharide (CTS) constructed from four alpha-glucopyranosyl residues. Catalyzes an intermolecular transglucosylation in which a glucose residue at the non-reducing end of maltotetraose is transferred to the 6-OH of an other non-reducing glucose, leading to the formation of alpha-isomaltosyl-(1-&gt;4)-D-maltotriose. Has a wide substrate specificity, and acts on oligosaccharides with alpha-1,4-glucosidic linkages at the non-reducing end, except for maltose. In contrast, has little activity toward oligosaccharides with alpha-1,6-glucosidic linkages at the non-reducing end. This Sporosarcina globispora (Bacillus globisporus) protein is 1,6-alpha-glucosyltransferase.